The sequence spans 1356 residues: MPYIGASNLSEHSFVNLKEKHAITHKGTSSSVASLQTPPSPDQENHIDNELENYDTSLSDVSTPNKKEGDEFEQSLRDTFASFRKTKPPPPLDFEQPRLPSTASSSVDSTVSSPLTDEDIKELEFLPNESTHSYSYNPLSPNSLAVRLRILKRSLEIIIQNPSMLLEPTPDDLPPLKEFAGRRSSLPRTSASANHLMNRNKSQIWNTTSATLNAFVNNTSSSSAASSALSNKKPGTPVFPNLDPTHSQTFHRANSLAYLPSILPEQDPLLKHNNSLFRGDYGNNISPERPSFRQPFKDQTSNLRNSSLLNERAYQEDETFLPHHGPSMDLLNEQRANLKSLLNLLNETLEKNTSERASDLHMISLFNLNKLMLGDPKKNNSERDKRTEKLKKILLDSLAEPFFEHYNFIGDNPIADTDELKEEIDEFTGSGDTTAITDIRPQQDYGRILRTFTSTKNSAPQAIFTCSQEDPWQFRAANDLACLVFGISQNAIRALTLMDLIHTDSRNFVLHKLLSTEGQEMVFTGEIIGIVQPETLSSSKVVWASFWAKRKNGLLVCVFEKVPCDYVDVLLNLDDFGAENIVDKCELLSDGPTLSSSSTLSLPKMASSPTGSKLEYSLERKILEKSYTKPTSTENRNGDENQLDGDSHSEPSLSSSPVRSKKSVKFANDIKDVKSISQSLAKLMDDVRNGVVFDPDDDLLPMPIKVCNHINETRYFTLNHLSYNIPCAVSSTVLEDELKLKIHSLPYQAGLFIVDSHTLDIVSSNKSILKNMFGYHFAELVGKSITEIIPSFPKFLQFINDKYPALDITLHKNKGLVLTEHFFRKIQAEIMGDRKSFYTSVGIDGLHRDGCEIKIDFQLRVMNSKVILLWVTHSRDVVFEEYNTNPSQLKMLKESELSLMSSASSSASSSKKSSSRISTGTLKDMSNLSTYEDLAHRTNKLKYEIGDDSRAHSQSTLSEQEQVPLENDKDSGEMMLADPEMKHKLELARIYSRDKSQFVKEGNFKVDENLIISKISLSPSTESLADSKSSGKGLSPLEEEKLIDENATENGLAGSPKDEDGIIMTNKRGNQPVSTFLRTPEKNIGAQKHVKKFSDFVSLQKMGEGAYGKVNLCIHKKNRYIVVIKMIFKERILVDTWVRDRKLGTIPSEIQIMATLNKKPHENILRLLDFFEDDDYYYIETPVHGETGCIDLFDLIEFKTNMTEFEAKLIFKQVVAGIKHLHDQGIVHRDIKDENVIVDSKGFVKIIDFGSAAYVKSGPFDVFVGTIDYAAPEVLGGNPYEGQPQDIWAIGILLYTVVFKENPFYNIDEILEGDLKFNNAEEVSEDCIELIKSILNRCVPKRPTIDDINNDKWLVI.

Ser-10 carries the phosphoserine modification. The disordered stretch occupies residues 20 to 115 (KHAITHKGTS…SVDSTVSSPL (96 aa)). 2 stretches are compositionally biased toward polar residues: residues 26–37 (KGTSSSVASLQT) and 54–64 (YDTSLSDVSTP). Positions 99–115 (LPSTASSSVDSTVSSPL) are enriched in low complexity. Phosphoserine is present on residues Ser-192, Ser-202, Ser-255, Ser-286, and Ser-327. In terms of domain architecture, PAS 1 spans 450–518 (RTFTSTKNSA…VLHKLLSTEG (69 aa)). The segment covering 592–608 (PTLSSSSTLSLPKMASS) has biased composition (low complexity). 2 disordered regions span residues 592 to 612 (PTLS…PTGS) and 627 to 660 (YTKP…PVRS). Residues 738–807 (LKLKIHSLPY…FINDKYPALD (70 aa)) enclose the PAS 2 domain. Ser-926 bears the Phosphoserine mark. The segment at 948–972 (DSRAHSQSTLSEQEQVPLENDKDSG) is disordered. Residues 952–961 (HSQSTLSEQE) show a composition bias toward polar residues. A phosphoserine mark is found at Ser-1018, Ser-1023, Ser-1035, and Ser-1055. Over residues 1021 to 1032 (TESLADSKSSGK) the composition is skewed to polar residues. The disordered stretch occupies residues 1021–1066 (TESLADSKSSGKGLSPLEEEKLIDENATENGLAGSPKDEDGIIMTN). Thr-1079 carries the post-translational modification Phosphothreonine. In terms of domain architecture, Protein kinase spans 1096–1354 (FVSLQKMGEG…IDDINNDKWL (259 aa)). ATP-binding positions include 1102–1110 (MGEGAYGKV) and Lys-1125. Asp-1230 functions as the Proton acceptor in the catalytic mechanism.

It belongs to the protein kinase superfamily. Ser/Thr protein kinase family.

It localises to the cytoplasm. It carries out the reaction L-seryl-[protein] + ATP = O-phospho-L-seryl-[protein] + ADP + H(+). It catalyses the reaction L-threonyl-[protein] + ATP = O-phospho-L-threonyl-[protein] + ADP + H(+). Its function is as follows. Serine/threonine-protein kinase involved in the control of sugar metabolism and translation. Phosphorylates UGP1, which is required for normal glycogen and beta-(1,6)-glucan synthesis. This phosphorylation shifts glucose partitioning toward cell wall glucan synthesis at the expense of glycogen synthesis. This Saccharomyces cerevisiae (strain ATCC 204508 / S288c) (Baker's yeast) protein is Serine/threonine-protein kinase PSK1 (PSK1).